Reading from the N-terminus, the 194-residue chain is MFIISFEGIDGSGKTTISKIIYEKLLIEIGSNKKIILTSEPFSQEIIKLIEEIGWKDPISLALLFTADRAYHLNLLFKQNPEIIIMDRYIDSTIAYQSSLGIDENWIRNLNKYFPEPDLTILLDLKPETAIARIKNKVDKFNFDEKISTLSKVREKYLELAKRNNKIRIVNAEKSIDEIVEETWSIVYSFLNHF.

Position 8-15 (8-15) interacts with ATP; sequence GIDGSGKT.

This sequence belongs to the thymidylate kinase family.

It carries out the reaction dTMP + ATP = dTDP + ADP. The polypeptide is Probable thymidylate kinase (Sulfolobus acidocaldarius (strain ATCC 33909 / DSM 639 / JCM 8929 / NBRC 15157 / NCIMB 11770)).